Consider the following 141-residue polypeptide: Large ribosomal subunit protein uL11 (141 aa).

The protein belongs to the universal ribosomal protein uL11 family. As to quaternary structure, part of the ribosomal stalk of the 50S ribosomal subunit. Interacts with L10 and the large rRNA to form the base of the stalk. L10 forms an elongated spine to which L12 dimers bind in a sequential fashion forming a multimeric L10(L12)X complex. Post-translationally, one or more lysine residues are methylated.

Its function is as follows. Forms part of the ribosomal stalk which helps the ribosome interact with GTP-bound translation factors. This Trichlorobacter lovleyi (strain ATCC BAA-1151 / DSM 17278 / SZ) (Geobacter lovleyi) protein is Large ribosomal subunit protein uL11.